Here is a 342-residue protein sequence, read N- to C-terminus: Uroporphyrinogen decarboxylase (342 aa).

Residues 22–26 (RQAGR), Phe42, Asp72, Tyr146, Ser201, and His317 contribute to the substrate site.

This sequence belongs to the uroporphyrinogen decarboxylase family. As to quaternary structure, homodimer.

It is found in the cytoplasm. It carries out the reaction uroporphyrinogen III + 4 H(+) = coproporphyrinogen III + 4 CO2. It functions in the pathway porphyrin-containing compound metabolism; protoporphyrin-IX biosynthesis; coproporphyrinogen-III from 5-aminolevulinate: step 4/4. Catalyzes the decarboxylation of four acetate groups of uroporphyrinogen-III to yield coproporphyrinogen-III. The chain is Uroporphyrinogen decarboxylase from Orientia tsutsugamushi (strain Ikeda) (Rickettsia tsutsugamushi).